The following is a 324-amino-acid chain: NADH-ubiquinone oxidoreductase chain 1 (324 aa).

8 helical membrane passes run 3–23 (FILS…SVAF), 77–97 (ISPI…PFFV), 104–124 (LGGL…MVAG), 150–170 (LALI…IYFF), 174–194 (IYMW…TISL), 226–246 (LIFM…CVIF), 250–270 (DVFN…FIWA), and 297–317 (YLLF…WIFF).

It belongs to the complex I subunit 1 family.

Its subcellular location is the mitochondrion inner membrane. The catalysed reaction is a ubiquinone + NADH + 5 H(+)(in) = a ubiquinol + NAD(+) + 4 H(+)(out). In terms of biological role, core subunit of the mitochondrial membrane respiratory chain NADH dehydrogenase (Complex I) that is believed to belong to the minimal assembly required for catalysis. Complex I functions in the transfer of electrons from NADH to the respiratory chain. The immediate electron acceptor for the enzyme is believed to be ubiquinone. This chain is NADH-ubiquinone oxidoreductase chain 1 (mt:ND1), found in Drosophila yakuba (Fruit fly).